Reading from the N-terminus, the 213-residue chain is Uracil phosphoribosyltransferase (213 aa).

Residues Arg78, Arg103, and 130–138 (DPMLATGGT) contribute to the 5-phospho-alpha-D-ribose 1-diphosphate site. Residues Ile197 and 202 to 204 (GDA) each bind uracil. 5-phospho-alpha-D-ribose 1-diphosphate is bound at residue Asp203.

Belongs to the UPRTase family. Mg(2+) is required as a cofactor.

The catalysed reaction is UMP + diphosphate = 5-phospho-alpha-D-ribose 1-diphosphate + uracil. It participates in pyrimidine metabolism; UMP biosynthesis via salvage pathway; UMP from uracil: step 1/1. Its activity is regulated as follows. Allosterically activated by GTP. Its function is as follows. Catalyzes the conversion of uracil and 5-phospho-alpha-D-ribose 1-diphosphate (PRPP) to UMP and diphosphate. The chain is Uracil phosphoribosyltransferase from Nocardioides sp. (strain ATCC BAA-499 / JS614).